The primary structure comprises 134 residues: Small ribosomal subunit protein bS6 (134 aa).

Residues 103–134 are disordered; that stretch reads AAPVKSAEEGTEEVAAEAATEAPAETTTTVEG. Over residues 118–134 the composition is skewed to low complexity; that stretch reads AEAATEAPAETTTTVEG.

This sequence belongs to the bacterial ribosomal protein bS6 family.

Functionally, binds together with bS18 to 16S ribosomal RNA. This chain is Small ribosomal subunit protein bS6, found in Citrifermentans bemidjiense (strain ATCC BAA-1014 / DSM 16622 / JCM 12645 / Bem) (Geobacter bemidjiensis).